The chain runs to 410 residues: Transcription factor Dp-1 (410 aa).

Lys-3 bears the N6-acetyllysine mark. Residue Ser-23 is modified to Phosphoserine. A compositionally biased stretch (polar residues) spans 73–100; sequence SNTLVVGSPHTPSTHFASQNQPSDSSPW. The disordered stretch occupies residues 73–116; sequence SNTLVVGSPHTPSTHFASQNQPSDSSPWSAGKRNRKGEKNGKGL. The segment covering 104–116 has biased composition (basic residues); the sequence is KRNRKGEKNGKGL. The interval 105–127 is interaction with CEBPA; it reads RNRKGEKNGKGLRHFSMKVCEKV. Residues 113-195 mediate DNA binding; that stretch reads GKGLRHFSMK…KKEIKWIGLP (83 aa). Residues 161 to 195 carry the DEF box motif; it reads DQKNIRRRVYDALNVLMAMNIISKEKKEIKWIGLP. A dimerization region spans residues 204–277; the sequence is NLEVERQRRL…KKTVIDCSIS (74 aa). Positions 211-327 are enhances binding of RB protein to E2F; it reads RRLERIKQKQ…DLKMARSLVP (117 aa). Residues 214 to 246 are DCB1; that stretch reads ERIKQKQSQLQELILQQIAFKNLVQRNRHAEQQ. The interval 259–315 is DCB2; sequence LPFIIVNTSKKTVIDCSISNDKFEYLFNFDNTFEIHDDIEVLKRMGMACGLESGSCS. The disordered stretch occupies residues 370–410; sequence GMLATSSNGSQYSGSRVETPVSYVGEDDEEDDDFNENDEDD. The segment covering 373–385 has biased composition (polar residues); the sequence is ATSSNGSQYSGSR. Acidic residues predominate over residues 394-410; it reads GEDDEEDDDFNENDEDD.

This sequence belongs to the E2F/DP family. In terms of assembly, component of the E2F:DP transcription factor complex. Forms heterodimers with E2F family members. The complex can interact with hypophosphorylated retinoblastoma protein RB1 and related proteins (RBL1 and RBL2) that inhibit the E2F transactivation domain. This repression involves recruitment of histone deacetylase (HDAC). During the cell cycle, from mid-to-late G1 phase, RB family members become phosphorylated, detach from the DRTF1/E2F complex to render E2F transcriptionally active. Viral oncoproteins, notably E1A, T-antigen and HPV E7, are capable of sequestering RB protein, thus releasing the active complex. Part of the E2F6.com-1 complex in G0 phase is composed of E2F6, MGA, MAX, TFDP1, CBX3, BAT8, EUHMTASE1, RING1, RNF2, MBLR, L3MBTL2 YAF2. Component of the DREAM complex (also named LINC complex) at least composed of E2F4, E2F5, LIN9, LIN37, LIN52, LIN54, MYBL1, MYBL2, RBL1, RBL2, RBBP4, TFDP1 and TFDP2. The complex exists in quiescent cells where it represses cell cycle-dependent genes. It dissociates in S phase when LIN9, LIN37, LIN52 and LIN54 form a subcomplex that binds to MYBL2. The complex TFDP1:E2F1 interacts with CEBPA; the interaction prevents CEBPA binding to target gene promoters and represses its transcriptional activity. In terms of processing, phosphorylation by E2F1-bound cyclin A-CDK2, in the S phase, inhibits E2F-mediated DNA binding and transactivation. Post-translationally, ubiquitinated by the BCR(KBTBD5) complex, leading to its subsequent degradation. As to expression, highest levels in muscle. Also expressed in brain, placenta, liver and kidney. Lower levels in lung and pancreas. Not detected in heart.

It localises to the nucleus. The protein localises to the cytoplasm. Its function is as follows. Can stimulate E2F-dependent transcription. Binds DNA cooperatively with E2F family members through the E2 recognition site, 5'-TTTC[CG]CGC-3', found in the promoter region of a number of genes whose products are involved in cell cycle regulation or in DNA replication. The E2F1:DP complex appears to mediate both cell proliferation and apoptosis. Blocks adipocyte differentiation by repressing CEBPA binding to its target gene promoters. This chain is Transcription factor Dp-1 (TFDP1), found in Homo sapiens (Human).